Consider the following 237-residue polypeptide: MLTCKQYELLLFIHNHMKEIGVPPSFDEMKIALELTSKSGIHRLITALEERGFIRRLPNRARAVEVVRLPEKITFNLSSARKISPNVIENNRRKISKNSKNLNNFDIEDKKNVTVPIMGRIAAGVPVSAIQQQTNTLCLPADMISLGEHYALEVKDDSMIEAGILDKDTIIVRRQNTATPGEIIIALIDKEEATLKRYRRNGASIALEAANPHYETRIYRPERIEIQGKLIGLIRKY.

The H-T-H motif DNA-binding region spans 26–46 (FDEMKIALELTSKSGIHRLIT). Active-site for autocatalytic cleavage activity residues include Ser158 and Lys196.

Belongs to the peptidase S24 family. In terms of assembly, homodimer.

It carries out the reaction Hydrolysis of Ala-|-Gly bond in repressor LexA.. Represses a number of genes involved in the response to DNA damage (SOS response), including recA and lexA. In the presence of single-stranded DNA, RecA interacts with LexA causing an autocatalytic cleavage which disrupts the DNA-binding part of LexA, leading to derepression of the SOS regulon and eventually DNA repair. This chain is LexA repressor, found in Bartonella quintana (strain Toulouse) (Rochalimaea quintana).